Here is a 195-residue protein sequence, read N- to C-terminus: E3 ubiquitin-protein ligase ZNRF1 (195 aa).

Residues 1–10 show a composition bias toward polar residues; it reads MGGKQSSASR. The interval 1-37 is disordered; sequence MGGKQSSASRSRAPFPGVSSDDSAVPPSSNFGHFRGG. Residue Gly-2 is the site of N-myristoyl glycine attachment. Low complexity predominate over residues 18-29; it reads VSSDDSAVPPSS. The RING-type; atypical zinc-finger motif lies at 152-193; the sequence is CVICLEELSQGDTIARLPCLCIYHKSCIDSWFEVNRCCPEHP.

It localises to the endosome. Its subcellular location is the lysosome. It is found in the membrane. The enzyme catalyses S-ubiquitinyl-[E2 ubiquitin-conjugating enzyme]-L-cysteine + [acceptor protein]-L-lysine = [E2 ubiquitin-conjugating enzyme]-L-cysteine + N(6)-ubiquitinyl-[acceptor protein]-L-lysine.. It functions in the pathway protein modification; protein ubiquitination. E3 ubiquitin-protein ligase that plays a role in neuron cells differentiation. Plays a role in the establishment and maintenance of neuronal transmission and plasticity. This chain is E3 ubiquitin-protein ligase ZNRF1 (znrf1), found in Xenopus laevis (African clawed frog).